The following is a 340-amino-acid chain: Uridine nucleosidase (340 aa).

Residue histidine 254 is part of the active site.

The protein belongs to the IUNH family.

The protein resides in the cytoplasm. The protein localises to the nucleus. The enzyme catalyses uridine + H2O = D-ribose + uracil. Functionally, also acts on cytidine. The protein is Uridine nucleosidase (URH1) of Saccharomyces cerevisiae (strain ATCC 204508 / S288c) (Baker's yeast).